We begin with the raw amino-acid sequence, 608 residues long: Tyrosyl-DNA phosphodiesterase 1 (608 aa).

Residues 1 to 101 (MSQEGDYGRW…SDDELQPEMP (101 aa)) form a disordered region. S61 is subject to Phosphoserine. Position 147 is a phosphothreonine (T147). Residue S148 is modified to Phosphoserine. H263 functions as the Nucleophile in the catalytic mechanism. K265 serves as a coordination point for substrate. The tract at residues 400-403 (SVGS) is interaction with DNA. The Proton donor/acceptor role is filled by H493. A substrate-binding site is contributed by K495.

Belongs to the tyrosyl-DNA phosphodiesterase family. In terms of assembly, monomer. Post-translationally, phosphorylated on serine and/or threonine residues, but not on tyrosine residues. Ubiquitously expressed. Similar expression throughout the central nervous system (whole brain, amygdala, caudate nucleus, cerebellum, cerebral cortex, frontal lobe, hippocampus, medulla oblongata, occipital lobe, putamen, substantia nigra, temporal lobe, thalamus, nucleus accumbens and spinal cord) and increased expression in testis and thymus.

The protein localises to the nucleus. Its subcellular location is the cytoplasm. In terms of biological role, DNA repair enzyme that can remove a variety of covalent adducts from DNA through hydrolysis of a 3'-phosphodiester bond, giving rise to DNA with a free 3' phosphate. Catalyzes the hydrolysis of dead-end complexes between DNA and the topoisomerase I active site tyrosine residue. Hydrolyzes 3'-phosphoglycolates on protruding 3' ends on DNA double-strand breaks due to DNA damage by radiation and free radicals. Acts on blunt-ended double-strand DNA breaks and on single-stranded DNA. Has low 3'exonuclease activity and can remove a single nucleoside from the 3'end of DNA and RNA molecules with 3'hydroxyl groups. Has no exonuclease activity towards DNA or RNA with a 3'phosphate. The polypeptide is Tyrosyl-DNA phosphodiesterase 1 (TDP1) (Homo sapiens (Human)).